Reading from the N-terminus, the 64-residue chain is Alpha-toxin Ts5 (64 aa).

The region spanning 2–64 is the LCN-type CS-alpha/beta domain; that stretch reads KDGYPVEGDN…KEPTKTSGRC (63 aa). 4 cysteine pairs are disulfide-bonded: cysteine 12–cysteine 64, cysteine 16–cysteine 38, cysteine 24–cysteine 44, and cysteine 28–cysteine 46.

Belongs to the long (4 C-C) scorpion toxin superfamily. Sodium channel inhibitor family. Alpha subfamily. As to expression, expressed by the venom gland.

It is found in the secreted. Functionally, alpha toxins bind voltage-independently at site-3 of sodium channels (Nav) and inhibit the inactivation of the activated channels, thereby blocking neuronal transmission. By extending the depolarized period it indirectly affects beta-cell voltage-dependent potassium channels, thus increasing potassium permeability. This is Alpha-toxin Ts5 from Tityus serrulatus (Brazilian scorpion).